The sequence spans 821 residues: Phenylalanine--tRNA ligase beta subunit (821 aa).

Residues 39-149 enclose the tRNA-binding domain; it reads SENVKGIVLG…EDIALNHNLG (111 aa). Residues 414 to 507 enclose the B5 domain; that stretch reads LKKILIPLRR…RLIGYDMFDL (94 aa). Residues Asp-485, Asp-491, Glu-494, and Glu-495 each coordinate Mg(2+). The FDX-ACB domain maps to 727 to 820; it reads PTVPKMERDI…IEKKFSTKLR (94 aa).

It belongs to the phenylalanyl-tRNA synthetase beta subunit family. Type 1 subfamily. As to quaternary structure, tetramer of two alpha and two beta subunits. Requires Mg(2+) as cofactor.

It localises to the cytoplasm. The enzyme catalyses tRNA(Phe) + L-phenylalanine + ATP = L-phenylalanyl-tRNA(Phe) + AMP + diphosphate + H(+). The protein is Phenylalanine--tRNA ligase beta subunit of Prochlorococcus marinus subsp. pastoris (strain CCMP1986 / NIES-2087 / MED4).